A 118-amino-acid chain; its full sequence is Large ribosomal subunit protein bL20 (118 aa).

The protein belongs to the bacterial ribosomal protein bL20 family.

Functionally, binds directly to 23S ribosomal RNA and is necessary for the in vitro assembly process of the 50S ribosomal subunit. It is not involved in the protein synthesizing functions of that subunit. The sequence is that of Large ribosomal subunit protein bL20 from Psychrobacter sp. (strain PRwf-1).